The sequence spans 664 residues: DNA topoisomerase 4 subunit B (664 aa).

ATP-binding positions include Y7, N47, D74, 114–120 (GLHGVGA), and K341. A disordered region spans residues 386–418 (REAARKAREDARSGKKNKRKDTLLSGKLTPAQS). Positions 387–398 (EAARKAREDARS) are enriched in basic and acidic residues. In terms of domain architecture, Toprim spans 424–538 (NELYLVEGDS…AGRVFIALPP (115 aa)). Residues E430, D503, and D505 each coordinate Mg(2+).

This sequence belongs to the type II topoisomerase family. ParE type 2 subfamily. In terms of assembly, heterotetramer composed of ParC and ParE. Requires Mg(2+) as cofactor. Mn(2+) serves as cofactor. The cofactor is Ca(2+).

It carries out the reaction ATP-dependent breakage, passage and rejoining of double-stranded DNA.. Its function is as follows. Topoisomerase IV is essential for chromosome segregation. It relaxes supercoiled DNA. Performs the decatenation events required during the replication of a circular DNA molecule. This is DNA topoisomerase 4 subunit B from Staphylococcus epidermidis (strain ATCC 35984 / DSM 28319 / BCRC 17069 / CCUG 31568 / BM 3577 / RP62A).